A 348-amino-acid chain; its full sequence is Holliday junction branch migration complex subunit RuvB (348 aa).

A compositionally biased stretch (polar residues) spans methionine 1 to serine 10. The disordered stretch occupies residues methionine 1 to leucine 41. Residues proline 13–tyrosine 197 form a large ATPase domain (RuvB-L) region. Residues serine 28 to leucine 41 are compositionally biased toward basic and acidic residues. Positions 36, 37, 78, 81, 82, 83, 187, 197, and 234 each coordinate ATP. Residue threonine 82 coordinates Mg(2+). The small ATPAse domain (RuvB-S) stretch occupies residues glycine 198–arginine 269. The segment at histidine 272–alanine 348 is head domain (RuvB-H). The DNA site is built by arginine 327 and arginine 332.

It belongs to the RuvB family. Homohexamer. Forms an RuvA(8)-RuvB(12)-Holliday junction (HJ) complex. HJ DNA is sandwiched between 2 RuvA tetramers; dsDNA enters through RuvA and exits via RuvB. An RuvB hexamer assembles on each DNA strand where it exits the tetramer. Each RuvB hexamer is contacted by two RuvA subunits (via domain III) on 2 adjacent RuvB subunits; this complex drives branch migration. In the full resolvosome a probable DNA-RuvA(4)-RuvB(12)-RuvC(2) complex forms which resolves the HJ.

It is found in the cytoplasm. It catalyses the reaction ATP + H2O = ADP + phosphate + H(+). Functionally, the RuvA-RuvB-RuvC complex processes Holliday junction (HJ) DNA during genetic recombination and DNA repair, while the RuvA-RuvB complex plays an important role in the rescue of blocked DNA replication forks via replication fork reversal (RFR). RuvA specifically binds to HJ cruciform DNA, conferring on it an open structure. The RuvB hexamer acts as an ATP-dependent pump, pulling dsDNA into and through the RuvAB complex. RuvB forms 2 homohexamers on either side of HJ DNA bound by 1 or 2 RuvA tetramers; 4 subunits per hexamer contact DNA at a time. Coordinated motions by a converter formed by DNA-disengaged RuvB subunits stimulates ATP hydrolysis and nucleotide exchange. Immobilization of the converter enables RuvB to convert the ATP-contained energy into a lever motion, pulling 2 nucleotides of DNA out of the RuvA tetramer per ATP hydrolyzed, thus driving DNA branch migration. The RuvB motors rotate together with the DNA substrate, which together with the progressing nucleotide cycle form the mechanistic basis for DNA recombination by continuous HJ branch migration. Branch migration allows RuvC to scan DNA until it finds its consensus sequence, where it cleaves and resolves cruciform DNA. The protein is Holliday junction branch migration complex subunit RuvB of Parasynechococcus marenigrum (strain WH8102).